We begin with the raw amino-acid sequence, 729 residues long: Polyribonucleotide nucleotidyltransferase (729 aa).

The interval 399 to 419 (YMHNYNFPPYSTGETGRVGSP) is disordered. Residues D509 and D515 each contribute to the Mg(2+) site. In terms of domain architecture, KH spans 575-634 (PRVISVKIPVDKIGEVIGPKGKMINQIQADSGAEITVEDDGTIYIGAADGPAAETARSAI). The 73-residue stretch at 646–718 (GERYLGTIVK…ARGKISLAPG (73 aa)) folds into the S1 motif domain.

The protein belongs to the polyribonucleotide nucleotidyltransferase family. Mg(2+) serves as cofactor.

It is found in the cytoplasm. It catalyses the reaction RNA(n+1) + phosphate = RNA(n) + a ribonucleoside 5'-diphosphate. Functionally, involved in mRNA degradation. Catalyzes the phosphorolysis of single-stranded polyribonucleotides processively in the 3'- to 5'-direction. The polypeptide is Polyribonucleotide nucleotidyltransferase (Parafrankia sp. (strain EAN1pec)).